We begin with the raw amino-acid sequence, 852 residues long: Phenylalanine--tRNA ligase beta subunit (852 aa).

A tRNA-binding domain is found at P44–K159. The 83-residue stretch at P428–S510 folds into the B5 domain. 4 residues coordinate Mg(2+): D488, D494, E497, and E498. In terms of domain architecture, FDX-ACB spans S758 to R851.

This sequence belongs to the phenylalanyl-tRNA synthetase beta subunit family. Type 1 subfamily. In terms of assembly, tetramer of two alpha and two beta subunits. Mg(2+) serves as cofactor.

Its subcellular location is the cytoplasm. The catalysed reaction is tRNA(Phe) + L-phenylalanine + ATP = L-phenylalanyl-tRNA(Phe) + AMP + diphosphate + H(+). The polypeptide is Phenylalanine--tRNA ligase beta subunit (Corynebacterium jeikeium (strain K411)).